Here is a 1065-residue protein sequence, read N- to C-terminus: Pumilio domain-containing protein P35G2.14 (1065 aa).

Disordered stretches follow at residues 1-78, 130-265, and 422-573; these read MHQD…SLRS, ITSK…PWSP, and TTGF…NTNS. A compositionally biased stretch (polar residues) spans 16–44; it reads RNTISKPSNNNPPLDMSSLNNDFGQQLDS. The span at 59–77 shows a compositional bias: low complexity; sequence NPSSNFNDSNRSNISSSLR. Composition is skewed to polar residues over residues 134 to 151 and 169 to 189; these read LQNNSNLSVTSSANRGRT and SSVSSGKQHLSSLSLHTHFNP. Composition is skewed to low complexity over residues 190-224 and 236-246; these read SSSSTVSSDSLESSQQKAPSSSSTATPASAASEII and SASNAANSGSN. Composition is skewed to polar residues over residues 247–262 and 434–455; these read TIRARQTTRTRSNTLP and GLNTSLFNTSSGGSLKSPTFEV. Residue Thr-260 is modified to Phosphothreonine. Low complexity predominate over residues 470–483; the sequence is PLGSLSSRPKPSSS. 2 stretches are compositionally biased toward polar residues: residues 495–522 and 529–551; these read LKTSNPYMPSPSLLSGSLANSSEHSSSP and IHNQPVSSSKSTASLNTNNNGLR. Ser-506, Ser-511, and Ser-515 each carry phosphoserine. Phosphothreonine is present on Thr-554. Positions 559–573 are enriched in low complexity; it reads NISTRSSSESNNTNS. The 75-residue stretch at 592–666 folds into the RRM domain; it reads HALWVGNLPS…DPVCISFAKV (75 aa). In terms of domain architecture, PUM-HD spans 712–1065; sequence DLSKIYQILN…ELKKLAEVCA (354 aa). Pumilio repeat units follow at residues 771 to 808, 809 to 844, 846 to 884, 886 to 917, 919 to 954, and 956 to 993; these read AINWLDEVSDLSSDHLGNTVVQKLFDYCSDPVKEMMLE, RIAPHLAQIGIHKNGTWAAQKIVDVASTEAQMRLIA, HLQPYIPLLFADQFGNYVVQTCLKFGAPMNDFVFEAILN, FWVIAQSRYGSRAVRACLESPDVTEEQRVLVA, AITVYSVHLAMNGNGTLLLTYLVENMNYPHIPILLT, and RFVQDIVRVCTHRLAYNSLLKIISISQGDTACGDLVVD.

It is found in the cytoplasm. This chain is Pumilio domain-containing protein P35G2.14, found in Schizosaccharomyces pombe (strain 972 / ATCC 24843) (Fission yeast).